We begin with the raw amino-acid sequence, 521 residues long: MPPRKKETVMSEFERKRLENIAYNNAILSGISTTADKIIPKPAPPKPKRASTPRVKREPVKKEAARPTRQSSRLAGLEADSAVLKRKLDVEAEEEAAKAKAKRMRVSGDLNLGDITVEGRKWESSADGLALLKGLGVRGAQPGVRTFTEKDVKHTKDKGLKDLRLRMSGLKLYEKWAVNDIKIVPQRIYSMCFHPTEEKPIIFAGDKEGAMGVFDASQPTPKIEDDDEDAEYPDPIISAFKTHSRTISSFHFSPTDANAIYSASYDSSIRKLDLDKGISTEIFAPSSSSEDLPISAIDIPTTDPNMIIFSTLHGSLGRQDQRTKPSSAEIWGLTDHKIGGFSLHPRHPYLVATASLDRTLKIWDLRKITGKGDLRHPALLGEHESRLSVSHASWSSSGHIATSSYDDRIKIYSFPSAGEWKAGHDIPAKEMQPTVEIPHNNQTGRWVTILKPQWQRNPQDGWQKFAIGNMNRFVDVYAEDGEQLAQLGGDGITAVPAVAHFHPTKDWVAGGTASGKLCLWM.

Residues 36 to 75 (DKIIPKPAPPKPKRASTPRVKREPVKKEAARPTRQSSRLA) are disordered. Positions 55–66 (VKREPVKKEAAR) are enriched in basic and acidic residues. WD repeat units lie at residues 183 to 224 (IVPQ…PKIE), 242 to 282 (THSR…STEI), 333 to 373 (LTDH…GKGD), 382 to 422 (EHES…EWKA), and 490 to 521 (DGITAVPAVAHFHPTKDWVAGGTASGKLCLWM).

This sequence belongs to the WD repeat DDB2/WDR76 family.

In terms of biological role, DNA-binding protein that binds to both single- and double-stranded DNA. Binds preferentially to UV-damaged DNA. May be involved in DNA-metabolic processes. In Neurospora crassa (strain ATCC 24698 / 74-OR23-1A / CBS 708.71 / DSM 1257 / FGSC 987), this protein is DNA damage-binding protein cmr1.